The following is a 456-amino-acid chain: GTPase Der (456 aa).

EngA-type G domains are found at residues 3–167 (FTIA…PETE) and 185–360 (IRVA…AVWN). GTP-binding positions include 9–16 (GRPNVGKS), 56–60 (DTAGL), 119–122 (NKSE), 191–198 (GRPNAGKS), 238–242 (DTAGL), and 303–306 (NKWD). Residues 361 to 445 (RRVPTAALNR…PVRITLREKA (85 aa)) enclose the KH-like domain.

It belongs to the TRAFAC class TrmE-Era-EngA-EngB-Septin-like GTPase superfamily. EngA (Der) GTPase family. In terms of assembly, associates with the 50S ribosomal subunit.

Its function is as follows. GTPase that plays an essential role in the late steps of ribosome biogenesis. This is GTPase Der from Bradyrhizobium sp. (strain BTAi1 / ATCC BAA-1182).